We begin with the raw amino-acid sequence, 783 residues long: Mitochondrial intermediate peptidase (783 aa).

The N-terminal 33 residues, 1-33 (MKAGIPLSRCTQRIPLLVARQVSRNITTTTTKF), are a transit peptide targeting the mitochondrion. His565 lines the Zn(2+) pocket. Glu566 is a catalytic residue. The Zn(2+) site is built by His569 and His572.

The protein belongs to the peptidase M3 family. Zn(2+) serves as cofactor.

It is found in the mitochondrion matrix. It carries out the reaction Release of an N-terminal octapeptide as second stage of processing of some proteins imported into the mitochondrion.. Its function is as follows. Cleaves proteins, imported into the mitochondrion, to their mature size. While most mitochondrial precursor proteins are processed to the mature form in one step by mitochondrial processing peptidase (MPP), the sequential cleavage by MIP of an octapeptide after initial processing by MPP is a required step for a subgroup of nuclear-encoded precursor proteins destined for the matrix or the inner membrane. This chain is Mitochondrial intermediate peptidase (OCT1), found in Candida albicans (strain SC5314 / ATCC MYA-2876) (Yeast).